The following is a 353-amino-acid chain: Phosphoribosylformylglycinamidine cyclo-ligase (353 aa).

This sequence belongs to the AIR synthase family.

It localises to the cytoplasm. The catalysed reaction is 2-formamido-N(1)-(5-O-phospho-beta-D-ribosyl)acetamidine + ATP = 5-amino-1-(5-phospho-beta-D-ribosyl)imidazole + ADP + phosphate + H(+). It functions in the pathway purine metabolism; IMP biosynthesis via de novo pathway; 5-amino-1-(5-phospho-D-ribosyl)imidazole from N(2)-formyl-N(1)-(5-phospho-D-ribosyl)glycinamide: step 2/2. This Methylocella silvestris (strain DSM 15510 / CIP 108128 / LMG 27833 / NCIMB 13906 / BL2) protein is Phosphoribosylformylglycinamidine cyclo-ligase.